We begin with the raw amino-acid sequence, 68 residues long: DNA-directed RNA polymerase subunit Rpo10 (68 aa).

Residues cysteine 7, cysteine 10, cysteine 44, and cysteine 45 each coordinate Zn(2+).

Belongs to the archaeal Rpo10/eukaryotic RPB10 RNA polymerase subunit family. As to quaternary structure, part of the RNA polymerase complex. Zn(2+) serves as cofactor.

The protein resides in the cytoplasm. The catalysed reaction is RNA(n) + a ribonucleoside 5'-triphosphate = RNA(n+1) + diphosphate. Its function is as follows. DNA-dependent RNA polymerase (RNAP) catalyzes the transcription of DNA into RNA using the four ribonucleoside triphosphates as substrates. In Methanococcus maripaludis (strain DSM 14266 / JCM 13030 / NBRC 101832 / S2 / LL), this protein is DNA-directed RNA polymerase subunit Rpo10.